A 447-amino-acid chain; its full sequence is Argininosuccinate lyase (447 aa).

The protein belongs to the lyase 1 family. Argininosuccinate lyase subfamily.

Its subcellular location is the cytoplasm. It carries out the reaction 2-(N(omega)-L-arginino)succinate = fumarate + L-arginine. It participates in amino-acid biosynthesis; L-arginine biosynthesis; L-arginine from L-ornithine and carbamoyl phosphate: step 3/3. The chain is Argininosuccinate lyase from Bacteroides fragilis (strain ATCC 25285 / DSM 2151 / CCUG 4856 / JCM 11019 / LMG 10263 / NCTC 9343 / Onslow / VPI 2553 / EN-2).